Consider the following 397-residue polypeptide: Serine protease MT3772 (397 aa).

Helical transmembrane passes span 9–29 (IAVL…GALG), 32–52 (LSFG…PHIV), 62–82 (LFAA…AGVV), and 102–122 (VIGV…LAMP). A disulfide bridge connects residues cysteine 214 and cysteine 395. Residue histidine 235 is the Proton acceptor of the active site. The active site involves aspartate 264. The active-site Charge relay system is the serine 343.

This sequence belongs to the peptidase S1C family. In terms of assembly, monomer.

It is found in the membrane. Its function is as follows. Required for M.tuberculosis resistance to oxidative stress in addition to its role in resistance to acid, which is essential for virulence. The polypeptide is Serine protease MT3772 (Mycobacterium tuberculosis (strain CDC 1551 / Oshkosh)).